The primary structure comprises 292 residues: Non-homologous end joining protein Ku (292 aa).

Positions 12–196 constitute a Ku domain; the sequence is KLSLVTCPVV…KITKDMVELA (185 aa). Residues 231 to 292 are disordered; it reads KPIKLPEPEE…RSAARQRKAG (62 aa). Positions 271–292 are enriched in basic residues; that stretch reads APAHRRPAKKAHRSAARQRKAG.

The protein belongs to the prokaryotic Ku family. In terms of assembly, homodimer. Interacts with LigD.

Functionally, with LigD forms a non-homologous end joining (NHEJ) DNA repair enzyme, which repairs dsDNA breaks with reduced fidelity. Binds linear dsDNA with 5'- and 3'- overhangs but not closed circular dsDNA nor ssDNA. Recruits and stimulates the ligase activity of LigD. The protein is Non-homologous end joining protein Ku of Bradyrhizobium sp. (strain ORS 278).